The following is a 375-amino-acid chain: N-acetylneuraminate epimerase (375 aa).

The signal sequence occupies residues M1–A22. Kelch repeat units lie at residues T43 to D87, K89 to G140, K142 to A176, A177 to G222, L225 to A273, K295 to N344, and V346 to E375. E231 (proton acceptor) is an active-site residue.

This sequence belongs to the NanM family. Homodimer.

Its subcellular location is the periplasm. The catalysed reaction is N-acetyl-alpha-neuraminate = N-acetyl-beta-neuraminate. Functionally, converts alpha-N-acetylneuranimic acid (Neu5Ac) to the beta-anomer, accelerating the equilibrium between the alpha- and beta-anomers. Probably facilitates sialidase-negative bacteria to compete successfully for limited amounts of extracellular Neu5Ac, which is likely taken up in the beta-anomer. In addition, the rapid removal of sialic acid from solution might be advantageous to the bacterium to damp down host responses. The polypeptide is N-acetylneuraminate epimerase (Haemophilus influenzae (strain PittEE)).